The primary structure comprises 24 residues: Prokineticin 1-like protein (24 aa).

The cysteines at positions 7 and 19 are disulfide-linked.

Expressed by the skin glands.

The protein localises to the secreted. In terms of biological role, stimulates insulin secretion by BRIN-BD11 cells in vitro. This is Prokineticin 1-like protein from Pelophylax saharicus (Sahara frog).